Consider the following 212-residue polypeptide: MQTAIIDYGMGNLHSVLKSVRTAGQLAGKNTEIFLSGDPDRVSRADKVIFPGQGAMPDCMAALKRDGLDEAVKDALKNKPFFGICVGAQLLFDHSEEGNTDGLGWFGGKVRRFERDLRDPQGCRLKVPHMGWNTVRQTQNHPLFKDIPQDTRFYFVHSYYFAPENPETILGESDYPSPFACIVGKDNVFATQFHTEKSHDAGLTMLKNFLNW.

The region spanning 2–212 is the Glutamine amidotransferase type-1 domain; sequence QTAIIDYGMG…LTMLKNFLNW (211 aa). The active-site Nucleophile is Cys85. Residues His194 and Glu196 contribute to the active site.

Heterodimer of HisH and HisF.

It localises to the cytoplasm. It catalyses the reaction 5-[(5-phospho-1-deoxy-D-ribulos-1-ylimino)methylamino]-1-(5-phospho-beta-D-ribosyl)imidazole-4-carboxamide + L-glutamine = D-erythro-1-(imidazol-4-yl)glycerol 3-phosphate + 5-amino-1-(5-phospho-beta-D-ribosyl)imidazole-4-carboxamide + L-glutamate + H(+). The catalysed reaction is L-glutamine + H2O = L-glutamate + NH4(+). It functions in the pathway amino-acid biosynthesis; L-histidine biosynthesis; L-histidine from 5-phospho-alpha-D-ribose 1-diphosphate: step 5/9. Functionally, IGPS catalyzes the conversion of PRFAR and glutamine to IGP, AICAR and glutamate. The HisH subunit catalyzes the hydrolysis of glutamine to glutamate and ammonia as part of the synthesis of IGP and AICAR. The resulting ammonia molecule is channeled to the active site of HisF. This is Imidazole glycerol phosphate synthase subunit HisH (hisH) from Neisseria meningitidis serogroup B (strain ATCC BAA-335 / MC58).